The primary structure comprises 220 residues: uncharacterized protein (220 aa).

Positions 194 to 220 are disordered; the sequence is DQSQQQATKSNSKTKKLKGNHGEKTKI. Over residues 195-204 the composition is skewed to polar residues; it reads QSQQQATKSN.

This is an uncharacterized protein from Borreliella burgdorferi (strain ATCC 35210 / DSM 4680 / CIP 102532 / B31) (Borrelia burgdorferi).